We begin with the raw amino-acid sequence, 304 residues long: UTP--glucose-1-phosphate uridylyltransferase 1 (304 aa).

This sequence belongs to the UDPGP type 2 family.

It catalyses the reaction alpha-D-glucose 1-phosphate + UTP + H(+) = UDP-alpha-D-glucose + diphosphate. Its pathway is carbohydrate metabolism; nucleotide-sugar metabolism. The chain is UTP--glucose-1-phosphate uridylyltransferase 1 (hasC1) from Streptococcus pyogenes serotype M1.